The chain runs to 237 residues: Proteasome subunit alpha type-5-A (237 aa).

An N-acetylmethionine modification is found at M1. Residues K43 and K66 each participate in a glycyl lysine isopeptide (Lys-Gly) (interchain with G-Cter in ubiquitin) cross-link.

Belongs to the peptidase T1A family. Component of the 20S core complex of the 26S proteasome. The 26S proteasome is composed of a core protease (CP), known as the 20S proteasome, capped at one or both ends by the 19S regulatory particle (RP/PA700). The 20S proteasome core is composed of 28 subunits that are arranged in four stacked rings, resulting in a barrel-shaped structure. The two end rings are each formed by seven alpha subunits, and the two central rings are each formed by seven beta subunits. The catalytic chamber with the active sites is on the inside of the barrel.

It is found in the cytoplasm. The protein localises to the nucleus. Functionally, the proteasome is a multicatalytic proteinase complex which is characterized by its ability to cleave peptides with Arg, Phe, Tyr, Leu, and Glu adjacent to the leaving group at neutral or slightly basic pH. The proteasome has an ATP-dependent proteolytic activity. This is Proteasome subunit alpha type-5-A (PAE1) from Arabidopsis thaliana (Mouse-ear cress).